The sequence spans 831 residues: Intraflagellar transport protein 88 (831 aa).

TPR repeat units lie at residues 68-101 (IFKLLRDGMSAASCKDYVTALGRIREAIKLEQKV), 120-153 (TCIWMHWAQIQALGGQPEMALSTYEKIVKTAEGA), 156-189 (AQIRFNMGNINHNLGKYNEALKNFRMAIDQASPS), 248-281 (FDPLYTVLIGYYALGVPEKMIDAYSRLIDSSILI), 492-525 (RGVHTNIAFIYYLKGDYEASARHAQIALEIDPYD), 526-559 (SFAHINLGCTYSKTNQWELSLREFLKAQEINMES), 560-593 (VQATYNAGLVYFKQQEYKTAYSCFQKVASKLPSY), 595-627 (DAIYMSADCLARMSQIDEAIQMLSNLVTMFSAV), 632-665 (PSIYIRLGELYSIAGDEGQAAHYFKEAHRLVPFS), 666-699 (LAVINWLGSHYIKNELYEQARVCFEKASRVDTTT), and 700-733 (PKWSLAVAACLRKSKQYRDAIYEYKHILKRFPTN). The segment at 785–816 (RRNSVAAVGPGSRAGQDRFEASNNRVSSNTGD) is disordered. Residues 805–815 (ASNNRVSSNTG) show a composition bias toward polar residues.

The protein resides in the cell projection. It localises to the cilium. The protein localises to the flagellum. It is found in the cytoplasm. Its subcellular location is the cytoskeleton. The protein resides in the flagellum axoneme. It localises to the flagellum basal body. Functionally, component of the intraflagellar transport complex B (IFT-B) involved in flagellar assembly. The chain is Intraflagellar transport protein 88 from Giardia intestinalis (strain ATCC 50803 / WB clone C6) (Giardia lamblia).